Reading from the N-terminus, the 807-residue chain is 85/88 kDa calcium-independent phospholipase A2 (807 aa).

S13 carries the phosphoserine modification. ANK repeat units lie at residues 120–147, 151–181, 185–215, 219–248, 251–281, 286–312, 316–345, 349–378, and 382–403; these read WTVTHLAVELGIRECFHHSRIISCANST, EGCTPLHLACRKGDSEILVELVQYCHAQMDV, KGETAFHYAVQGDNPQVLQLLGKNASAGLNQ, QGLTPLHLACQMGKQEMVRVLLLCNARCNI, PGGFPIHTAMKFSQKGCAEMIISMDSNQIHS, YGASPLHWAKNAEMARMLLKRGCDVDS, SGNTALHVAVTRNRFDCVMVLLTYGANAGA, HGNTPLHLAMSKDNMEMVKALIVFGAEVDT, and FGETPAFIASKISKLITRKALL. 2 helical membrane-spanning segments follow: residues 481–501 and 512–532; these read LLCLDGGGVKGLVIIQLLIAI and LFDWVAGTSTGGILALAILHS. The 185-residue stretch at 482–666 folds into the PNPLA domain; sequence LCLDGGGVKG…LANNPTLDAM (185 aa). A GXGXXG motif is present at residues 486–491; it reads GGGVKG. A GXSXG motif is present at residues 518–522; sequence GTSTG. S520 (nucleophile) is an active-site residue. The Proton acceptor role is filled by D653. Residues 653–655 carry the DGA/G motif; the sequence is DGG. The calmodulin-binding (1-9-14 motif) stretch occupies residues 678–687; the sequence is RKGQGNKVKK. The calmodulin-binding (IQ motif) stretch occupies residues 749-760; the sequence is AWCEMVGIQYFR.

In terms of assembly, homodimer formed by catalytic domains tightly interacting through a large hydrophobic interface. The contact area involves 3 alpha helices, several loops and a part of the beta sheet from each monomer. Both active sites of the dimer are in close proximity adopting an open conformation that provide sufficient space for phospholipid access and favoring cooperativity in deacylation-reacylation reactions. Each monomer has 9 ankyrin repeats stacked side-by-side in an elongated structure oriented outwards from the catalytic core. Expressed in pancreatic beta-cells. Expressed in skeletal muscle (at protein level).

The protein resides in the cytoplasm. It localises to the cell membrane. Its subcellular location is the mitochondrion. It is found in the cell projection. The protein localises to the pseudopodium. The enzyme catalyses a 1,2-diacyl-sn-glycero-3-phosphocholine + H2O = a 1-acyl-sn-glycero-3-phosphocholine + a fatty acid + H(+). It carries out the reaction a 1-O-alkyl-2-acyl-sn-glycero-3-phosphocholine + H2O = a 1-O-alkyl-sn-glycero-3-phosphocholine + a fatty acid + H(+). It catalyses the reaction 1,2-dihexadecanoyl-sn-glycero-3-phosphocholine + H2O = 1-hexadecanoyl-sn-glycero-3-phosphocholine + hexadecanoate + H(+). The catalysed reaction is 1-hexadecanoyl-2-(9Z-octadecenoyl)-sn-glycero-3-phosphocholine + H2O = 1-hexadecanoyl-sn-glycero-3-phosphocholine + (9Z)-octadecenoate + H(+). The enzyme catalyses 1-hexadecanoyl-2-(9Z,12Z-octadecadienoyl)-sn-glycero-3-phosphocholine + H2O = (9Z,12Z)-octadecadienoate + 1-hexadecanoyl-sn-glycero-3-phosphocholine + H(+). It carries out the reaction 1-hexadecanoyl-2-(5Z,8Z,11Z,14Z-eicosatetraenoyl)-sn-glycero-3-phosphocholine + H2O = 1-hexadecanoyl-sn-glycero-3-phosphocholine + (5Z,8Z,11Z,14Z)-eicosatetraenoate + H(+). It catalyses the reaction 1-octadecanoyl-2-(5Z,8Z,11Z,14Z-eicosatetraenoyl)-sn-glycero-3-phosphocholine + H2O = 1-octadecanoyl-sn-glycero-3-phosphocholine + (5Z,8Z,11Z,14Z)-eicosatetraenoate + H(+). The catalysed reaction is 1-hexadecanoyl-2-(5Z,8Z,11Z,14Z-eicosatetraenoyl)-sn-glycero-3-phosphoethanolamine + H2O = 1-hexadecanoyl-sn-glycero-3-phosphoethanolamine + (5Z,8Z,11Z,14Z)-eicosatetraenoate + H(+). The enzyme catalyses 1,2-dihexadecanoyl-sn-glycero-3-phosphate + H2O = 1-hexadecanoyl-sn-glycero-3-phosphate + hexadecanoate + H(+). It carries out the reaction a 1-acyl-sn-glycero-3-phosphocholine + H2O = sn-glycerol 3-phosphocholine + a fatty acid + H(+). It catalyses the reaction 1-hexadecanoyl-sn-glycero-3-phosphocholine + H2O = sn-glycerol 3-phosphocholine + hexadecanoate + H(+). The catalysed reaction is 1-(5Z,8Z,11Z,14Z-eicosatetraenoyl)-sn-glycero-3-phosphocholine + H2O = sn-glycerol 3-phosphocholine + (5Z,8Z,11Z,14Z)-eicosatetraenoate + H(+). The enzyme catalyses 2-(5Z,8Z,11Z,14Z)-eicosatetraenoyl-sn-glycero-3-phosphocholine + H2O = sn-glycerol 3-phosphocholine + (5Z,8Z,11Z,14Z)-eicosatetraenoate + H(+). It carries out the reaction 1-O-hexadecyl-2-(5Z,8Z,11Z,14Z)-eicosatetraenoyl-sn-glycero-3-phosphocholine + H2O = 1-O-hexadecyl-sn-glycero-3-phosphocholine + (5Z,8Z,11Z,14Z)-eicosatetraenoate + H(+). It catalyses the reaction 1-O-hexadecyl-2-acetyl-sn-glycero-3-phosphocholine + H2O = 1-O-hexadecyl-sn-glycero-3-phosphocholine + acetate + H(+). The catalysed reaction is hexadecanoyl-CoA + H2O = hexadecanoate + CoA + H(+). The enzyme catalyses 1',3'-bis[1,2-di-(9Z-octadecenoyl)-sn-glycero-3-phospho]-glycerol + H2O = 1'-[1,2-di-(9Z-octadecenoyl)-sn-glycero-3-phospho]-3'-[1-(9Z-octadecenoyl)-sn-glycero-3-phospho]-glycerol + (9Z)-octadecenoate + H(+). It carries out the reaction 1'-[1,2-di-(9Z-octadecenoyl)-sn-glycero-3-phospho]-3'-[1-(9Z-octadecenoyl)-sn-glycero-3-phospho]-glycerol + H2O = 1',3'-bis-[1-(9Z-octadecenoyl)-sn-glycero-3-phospho]-glycerol + (9Z)-octadecenoate + H(+). It catalyses the reaction 1',3'-bis-[1,2-di-(9Z,12Z-octadecadienoyl)-sn-glycero-3-phospho]-glycerol + H2O = 1'-[1,2-di-(9Z,12Z-octadecadienoyl)-sn-glycero-3-phospho]-3'-[1-(9Z,12Z-octadecadienoyl)-sn-glycero-3-phospho]-glycerol + (9Z,12Z)-octadecadienoate + H(+). The catalysed reaction is 1-octadecanoyl-2-(15-hydroxy-(5Z,8Z,11Z,13E)-eicosatetraenoyl)-sn-glycero-3-phosphoethanolamine + H2O = 1-octadecanoyl-sn-glycero-3-phosphoethanolamine + 15-hydroxy-(5Z,8Z,11Z,13E)-eicosatetraenoate + H(+). With respect to regulation, activated by ATP. Inhibited by calcium-activated calmodulin. Inhibited by bromoenol lactone (BEL). In terms of biological role, calcium-independent phospholipase involved in phospholipid remodeling with implications in cellular membrane homeostasis, mitochondrial integrity and signal transduction. Hydrolyzes the ester bond of the fatty acyl group attached at sn-1 or sn-2 position of phospholipids (phospholipase A1 and A2 activity respectively), producing lysophospholipids that are used in deacylation-reacylation cycles. Hydrolyzes both saturated and unsaturated long fatty acyl chains in various glycerophospholipid classes such as phosphatidylcholines, phosphatidylethanolamines and phosphatidates, with a preference for hydrolysis at sn-2 position. Can further hydrolyze lysophospholipids carrying saturated fatty acyl chains (lysophospholipase activity). Upon oxidative stress, contributes to remodeling of mitochondrial phospholipids in pancreatic beta cells, in a repair mechanism to reduce oxidized lipid content. Preferentially hydrolyzes oxidized polyunsaturated fatty acyl chains from cardiolipins, yielding monolysocardiolipins that can be reacylated with unoxidized fatty acyls to regenerate native cardiolipin species. Hydrolyzes oxidized glycerophosphoethanolamines present in pancreatic islets, releasing oxidized polyunsaturated fatty acids such as hydroxyeicosatetraenoates (HETEs). Has thioesterase activity toward fatty-acyl CoA releasing CoA-SH known to facilitate fatty acid transport and beta-oxidation in mitochondria particularly in skeletal muscle. Plays a role in regulation of membrane dynamics and homeostasis. Selectively hydrolyzes sn-2 arachidonoyl group in plasmalogen phospholipids, structural components of lipid rafts and myelin. Regulates F-actin polymerization at the pseudopods, which is required for both speed and directionality of MCP1/CCL2-induced monocyte chemotaxis. Targets membrane phospholipids to produce potent lipid signaling messengers. Generates lysophosphatidate (LPA, 1-acyl-glycerol-3-phosphate), which acts via G-protein receptors in various cell types. Has phospholipase A2 activity toward platelet-activating factor (PAF, 1-O-alkyl-2-acetyl-sn-glycero-3-phosphocholine), likely playing a role in inactivation of this potent pro-inflammatory signaling lipid. In response to glucose, amplifies calcium influx in pancreatic beta cells to promote INS secretion. This is 85/88 kDa calcium-independent phospholipase A2 (Pla2g6) from Rattus norvegicus (Rat).